The following is a 299-amino-acid chain: MGIFVCRNSLRMLNVRWLYHRCLSLYNSNHGFNEAKIKEKLAQFTGGSVDLSKMDNGIAEICINNPSRMNAFTGTMMIELEERISDLENWKNGKGLIVYGAENTFCSGSDLNAVKAISNPQEGMMMCMLMQNTLTRLQRLPLISVALIQGKALGGGAELCTACDFRLMTEGSEIRFVHKQMGLVPGWGGAARLIHLIGSRHALKLLSGALRVHPENALELGLADNILLGTEDGFLSEAENWIMPYIKGPSDVSRAVKKVIISGREQKLEDALRTEKEIFGTVWGGLANLQALAKGTKHK.

The protein belongs to the enoyl-CoA hydratase/isomerase family.

It is found in the cytoplasm. Its subcellular location is the cytosol. The enzyme catalyses (2S)-ethylmalonyl-CoA + H(+) = butanoyl-CoA + CO2. The catalysed reaction is (S)-methylmalonyl-CoA + H(+) = propanoyl-CoA + CO2. It catalyses the reaction (2R)-ethylmalonyl-CoA + H(+) = butanoyl-CoA + CO2. Decarboxylates ethylmalonyl-CoA, a potentially toxic metabolite, to form butyryl-CoA, suggesting it might be involved in metabolite proofreading. Acts preferentially on (S)-ethylmalonyl-CoA but also has some activity on the (R)-isomer. Also has methylmalonyl-CoA decarboxylase activity at lower level. This Xenopus tropicalis (Western clawed frog) protein is Ethylmalonyl-CoA decarboxylase (echdc1).